The sequence spans 723 residues: Aminodeoxychorismate synthase (723 aa).

In terms of domain architecture, Glutamine amidotransferase type-1 spans 2–195 (RTLLVDNYDS…RDLTERHGRT (194 aa)). Catalysis depends on Cys82, which acts as the Nucleophile. The interval 96–117 (VGRAPEPRHGRTSAVRHDGTGL) is disordered. A compositionally biased stretch (basic and acidic residues) spans 98 to 114 (RAPEPRHGRTSAVRHDG). Residues His169 and Glu171 contribute to the active site. Disordered stretches follow at residues 192–219 (HGRTRHGGRAGHGTLPPPAPARETKATT) and 693–723 (FPGRERPGKDLDGEPDDGTDAGAPKDLVLPG). The segment at 255-723 (LDSSRPGGEL…GAPKDLVLPG (469 aa)) is PABB component. A compositionally biased stretch (basic and acidic residues) spans 695-704 (GRERPGKDLD).

It in the C-terminal section; belongs to the anthranilate synthase component I family.

It catalyses the reaction chorismate + L-glutamine = 4-amino-4-deoxychorismate + L-glutamate. Its pathway is antibiotic biosynthesis; candicidin biosynthesis. Functionally, involved in candicidin biosynthesis. Catalyzes the biosynthesis of 4-amino-4-deoxychorismate (ADC) from chorismate and glutamine. This Streptomyces griseus protein is Aminodeoxychorismate synthase.